Here is a 351-residue protein sequence, read N- to C-terminus: uncharacterized protein (351 aa).

Residues Asp-215, Asp-226, His-290, Glu-319, and Glu-333 each coordinate Mn(2+).

This sequence belongs to the peptidase M24B family. It depends on Mn(2+) as a cofactor.

This is an uncharacterized protein from Staphylococcus aureus (strain MSSA476).